Reading from the N-terminus, the 253-residue chain is Imidazole glycerol phosphate synthase subunit HisF (253 aa).

Active-site residues include D11 and D130.

This sequence belongs to the HisA/HisF family. As to quaternary structure, heterodimer of HisH and HisF.

Its subcellular location is the cytoplasm. The catalysed reaction is 5-[(5-phospho-1-deoxy-D-ribulos-1-ylimino)methylamino]-1-(5-phospho-beta-D-ribosyl)imidazole-4-carboxamide + L-glutamine = D-erythro-1-(imidazol-4-yl)glycerol 3-phosphate + 5-amino-1-(5-phospho-beta-D-ribosyl)imidazole-4-carboxamide + L-glutamate + H(+). The protein operates within amino-acid biosynthesis; L-histidine biosynthesis; L-histidine from 5-phospho-alpha-D-ribose 1-diphosphate: step 5/9. In terms of biological role, IGPS catalyzes the conversion of PRFAR and glutamine to IGP, AICAR and glutamate. The HisF subunit catalyzes the cyclization activity that produces IGP and AICAR from PRFAR using the ammonia provided by the HisH subunit. This is Imidazole glycerol phosphate synthase subunit HisF from Clostridium botulinum (strain Alaska E43 / Type E3).